A 313-amino-acid chain; its full sequence is Glyoxylate/hydroxypyruvate reductase A (313 aa).

Arg228 is a catalytic residue. His276 (proton donor) is an active-site residue.

The protein belongs to the D-isomer specific 2-hydroxyacid dehydrogenase family. GhrA subfamily.

Its subcellular location is the cytoplasm. It catalyses the reaction glycolate + NADP(+) = glyoxylate + NADPH + H(+). The enzyme catalyses (R)-glycerate + NAD(+) = 3-hydroxypyruvate + NADH + H(+). The catalysed reaction is (R)-glycerate + NADP(+) = 3-hydroxypyruvate + NADPH + H(+). In terms of biological role, catalyzes the NADPH-dependent reduction of glyoxylate and hydroxypyruvate into glycolate and glycerate, respectively. This chain is Glyoxylate/hydroxypyruvate reductase A, found in Yersinia enterocolitica serotype O:8 / biotype 1B (strain NCTC 13174 / 8081).